Reading from the N-terminus, the 363-residue chain is Protein arginine N-methyltransferase 2 (363 aa).

2 ANK repeats span residues 22–46 (AAQTAAPSVLADLLAEGAPAWFQDD) and 48–80 (LGWSCLHYAAERKEPECLEVLLQGGAVWNAVDK). An RMT2 domain is found at 111-363 (KTSAGDNLVF…RLPIAKMSLI (253 aa)). S-adenosyl-L-methionine contacts are provided by residues phenylalanine 120, 186-191 (FGLGIV), 209-211 (EAH), 236-237 (WQ), and aspartate 265.

It belongs to the class I-like SAM-binding methyltransferase superfamily. RMT2 methyltransferase family. Monomer.

The protein localises to the cytoplasm. Its subcellular location is the nucleus. In terms of biological role, S-adenosyl-L-methionine-dependent protein-arginine N-methyltransferase that methylates the delta-nitrogen atom of arginine residues to form N5-methylarginine (type IV) in target proteins. Monomethylates ribosomal protein L12. The sequence is that of Protein arginine N-methyltransferase 2 from Cryptococcus neoformans var. neoformans serotype D (strain B-3501A) (Filobasidiella neoformans).